A 461-amino-acid polypeptide reads, in one-letter code: Photosystem II CP43 reaction center protein (461 aa).

A propeptide spanning residues 1–2 (ME) is cleaved from the precursor. Threonine 3 carries the N-acetylthreonine modification. Threonine 3 carries the phosphothreonine modification. A run of 5 helical transmembrane segments spans residues 57–81 (LFEV…PHLA), 122–143 (LAGP…KRKK), 166–188 (KAMY…RSIT), 243–263 (RPSP…LSYS), and 279–300 (WFNN…ASQA). Residue glutamate 355 coordinates [CaMn4O5] cluster. A helical transmembrane segment spans residues 435-459 (RARAAAIGFEKGIDRSREIARKLKP).

This sequence belongs to the PsbB/PsbC family. PsbC subfamily. As to quaternary structure, PSII is composed of 1 copy each of membrane proteins PsbA, PsbB, PsbC, PsbD, PsbE, PsbF, PsbH, PsbI, PsbJ, PsbK, PsbL, PsbM, PsbT, PsbY, PsbZ, Psb30/Ycf12, at least 3 peripheral proteins of the oxygen-evolving complex and a large number of cofactors. It forms dimeric complexes. The cofactor is Binds multiple chlorophylls and provides some of the ligands for the Ca-4Mn-5O cluster of the oxygen-evolving complex. It may also provide a ligand for a Cl- that is required for oxygen evolution. PSII binds additional chlorophylls, carotenoids and specific lipids..

It is found in the plastid. The protein localises to the chloroplast thylakoid membrane. One of the components of the core complex of photosystem II (PSII). It binds chlorophyll and helps catalyze the primary light-induced photochemical processes of PSII. PSII is a light-driven water:plastoquinone oxidoreductase, using light energy to abstract electrons from H(2)O, generating O(2) and a proton gradient subsequently used for ATP formation. The sequence is that of Photosystem II CP43 reaction center protein from Euglena gracilis.